The primary structure comprises 93 residues: Large ribosomal subunit protein uL23cz/uL23cy (93 aa).

The protein belongs to the universal ribosomal protein uL23 family. As to quaternary structure, part of the 50S ribosomal subunit.

It is found in the plastid. Its subcellular location is the chloroplast. Functionally, binds to 23S rRNA. In Nymphaea alba (White water-lily), this protein is Large ribosomal subunit protein uL23cz/uL23cy (rpl23-A).